The following is an 89-amino-acid chain: Small ribosomal subunit protein uS15 (89 aa).

Belongs to the universal ribosomal protein uS15 family. As to quaternary structure, part of the 30S ribosomal subunit. Forms a bridge to the 50S subunit in the 70S ribosome, contacting the 23S rRNA.

Its function is as follows. One of the primary rRNA binding proteins, it binds directly to 16S rRNA where it helps nucleate assembly of the platform of the 30S subunit by binding and bridging several RNA helices of the 16S rRNA. Functionally, forms an intersubunit bridge (bridge B4) with the 23S rRNA of the 50S subunit in the ribosome. The protein is Small ribosomal subunit protein uS15 of Acinetobacter baylyi (strain ATCC 33305 / BD413 / ADP1).